A 483-amino-acid polypeptide reads, in one-letter code: Regulatory protein ViaA (483 aa).

Belongs to the ViaA family. Homodimer. Interacts with RavA.

Its subcellular location is the cytoplasm. Component of the RavA-ViaA chaperone complex, which may act on the membrane to optimize the function of some of the respiratory chains. ViaA stimulates the ATPase activity of RavA. This Escherichia coli (strain SMS-3-5 / SECEC) protein is Regulatory protein ViaA.